A 340-amino-acid chain; its full sequence is Heat-inducible transcription repressor HrcA (340 aa).

The protein belongs to the HrcA family.

Negative regulator of class I heat shock genes (grpE-dnaK-dnaJ and groELS operons). Prevents heat-shock induction of these operons. The chain is Heat-inducible transcription repressor HrcA from Clavibacter michiganensis subsp. michiganensis (strain NCPPB 382).